A 474-amino-acid polypeptide reads, in one-letter code: 6-phospho-beta-galactosidase (474 aa).

Positions 19, 116, 159, 160, and 297 each coordinate D-galactose 6-phosphate. Glu160 acts as the Proton donor in catalysis. Glu375 serves as the catalytic Nucleophile. D-galactose 6-phosphate is bound by residues Ser433, Trp434, Lys440, and Tyr442.

It belongs to the glycosyl hydrolase 1 family.

The catalysed reaction is a 6-phospho-beta-D-galactoside + H2O = D-galactose 6-phosphate + an alcohol. It participates in carbohydrate metabolism; lactose degradation; D-galactose 6-phosphate and beta-D-glucose from lactose 6-phosphate: step 1/1. This is 6-phospho-beta-galactosidase from Lacticaseibacillus casei (strain BL23) (Lactobacillus casei).